The primary structure comprises 226 residues: Large ribosomal subunit protein mL67 (226 aa).

The protein belongs to the mitochondrion-specific ribosomal protein mL67 family. Component of the mitochondrial large ribosomal subunit (mt-LSU). Mature yeast 74S mitochondrial ribosomes consist of a small (37S) and a large (54S) subunit. The 37S small subunit contains a 15S ribosomal RNA (15S mt-rRNA) and 34 different proteins. The 54S large subunit contains a 21S rRNA (21S mt-rRNA) and 46 different proteins.

It is found in the nucleus. The protein resides in the mitochondrion. Its function is as follows. Component of the mitochondrial ribosome (mitoribosome), a dedicated translation machinery responsible for the synthesis of mitochondrial genome-encoded proteins, including at least some of the essential transmembrane subunits of the mitochondrial respiratory chain. The mitoribosomes are attached to the mitochondrial inner membrane and translation products are cotranslationally integrated into the membrane. mL67/MHR1 also has extraribosomal functions, being involved in regulation of mitochondrial DNA recombination, maintenance and repair, and generation of homoplasmic cells. mL67/MHR1 also acts as transcription factor involved in regulation of RNA polymerase II-dependent transcription. The chain is Large ribosomal subunit protein mL67 (MHR1) from Saccharomyces cerevisiae (strain ATCC 204508 / S288c) (Baker's yeast).